The chain runs to 126 residues: Probable DNA-directed RNA polymerase II subunit RPB11 (126 aa).

This sequence belongs to the archaeal Rpo11/eukaryotic RPB11/RPC19 RNA polymerase subunit family. Component of the RNA polymerase II (Pol II) complex consisting of 12 subunits.

It localises to the nucleus. Functionally, DNA-dependent RNA polymerase catalyzes the transcription of DNA into RNA using the four ribonucleoside triphosphates as substrates. Component of RNA polymerase II which synthesizes mRNA precursors and many functional non-coding RNAs. Pol II is the central component of the basal RNA polymerase II transcription machinery. It is composed of mobile elements that move relative to each other. RPB11 is part of the core element with the central large cleft. The polypeptide is Probable DNA-directed RNA polymerase II subunit RPB11 (Plasmodium chabaudi chabaudi).